The sequence spans 241 residues: uncharacterized protein (241 aa).

One can recognise an HTH luxR-type domain in the interval 147 to 212 (FSYRSVILTL…EMYAWINSAQ (66 aa)).

This is an uncharacterized protein from Escherichia coli O157:H7.